Here is a 159-residue protein sequence, read N- to C-terminus: Large ribosomal subunit protein uL15 (159 aa).

Positions 1–13 (MRIHEVTPKEGST) are enriched in basic and acidic residues. The interval 1-51 (MRIHEVTPKEGSTKRRRRVGRGISAGQGASCGFGMRGQKSRSGTGTKAGFE) is disordered. The segment covering 23-35 (ISAGQGASCGFGM) has biased composition (gly residues).

The protein belongs to the universal ribosomal protein uL15 family. Part of the 50S ribosomal subunit.

Its function is as follows. Binds to the 23S rRNA. The chain is Large ribosomal subunit protein uL15 from Rippkaea orientalis (strain PCC 8801 / RF-1) (Cyanothece sp. (strain PCC 8801)).